The chain runs to 165 residues: Probable calcium-binding protein CML18 (165 aa).

4 EF-hand domains span residues 16-51 (EQLA…LGLK), 52-87 (PSQD…DLVK), 90-125 (YTDD…LGHA), and 126-161 (LTAE…AAFD). Ca(2+) contacts are provided by D29, N31, D33, S35, E40, D65, N67, N69, E76, D103, D105, N107, Y109, E114, D139, D141, D143, C145, and E150.

As to quaternary structure, calcium and pH-dependent interaction with NHX1 (increases when pH decreases, better at pH 5.5 than at pH 7.5). Also interacts with the CPB protein At2g18750.

It is found in the vacuole. Functionally, potential calcium sensor that modulates ion selectivity of NHX1. The chain is Probable calcium-binding protein CML18 (CML18) from Arabidopsis thaliana (Mouse-ear cress).